A 143-amino-acid chain; its full sequence is Large ribosomal subunit protein uL15 (143 aa).

The segment at Met1 to Leu57 is disordered. Residues Arg21 to Ala31 are compositionally biased toward gly residues.

Belongs to the universal ribosomal protein uL15 family. Part of the 50S ribosomal subunit.

In terms of biological role, binds to the 23S rRNA. The chain is Large ribosomal subunit protein uL15 from Ralstonia nicotianae (strain ATCC BAA-1114 / GMI1000) (Ralstonia solanacearum).